A 371-amino-acid chain; its full sequence is Spermidine/putrescine import ATP-binding protein PotA (371 aa).

The 231-residue stretch at 10–240 (VELRNVTKSY…PKNLFVARFI (231 aa)) folds into the ABC transporter domain. 42–49 (GPSGCGKT) contributes to the ATP binding site.

It belongs to the ABC transporter superfamily. Spermidine/putrescine importer (TC 3.A.1.11.1) family. In terms of assembly, the complex is composed of two ATP-binding proteins (PotA), two transmembrane proteins (PotB and PotC) and a solute-binding protein (PotD).

It is found in the cell inner membrane. The enzyme catalyses ATP + H2O + polyamine-[polyamine-binding protein]Side 1 = ADP + phosphate + polyamineSide 2 + [polyamine-binding protein]Side 1.. Functionally, part of the ABC transporter complex PotABCD involved in spermidine/putrescine import. Responsible for energy coupling to the transport system. This is Spermidine/putrescine import ATP-binding protein PotA from Haemophilus ducreyi (strain 35000HP / ATCC 700724).